We begin with the raw amino-acid sequence, 744 residues long: Collagen alpha-1(VIII) chain (744 aa).

Positions 1-24 are cleaved as a signal peptide; it reads MAVPPRPLQLLGILFIISLNSVRL. Residues 29 to 118 are nonhelical region (NC2); that stretch reads AYYGIKPLPP…KGEVPLASLR (90 aa). Residues 101 to 110 show a composition bias toward basic and acidic residues; that stretch reads KEVVPKKGKG. Disordered regions lie at residues 101 to 395, 412 to 439, and 457 to 590; these read KEVV…EPGL, GPKGEGGVVGPQGPPGPKGEPGLQGFPG, and GPIG…DMGL. Residues 119–572 form a triple-helical region (COL1) region; it reads GEQGPRGEPG…PGPPGPPGPP (454 aa). A compositionally biased stretch (pro residues) spans 129 to 138; sequence PRGPPGPPGL. A compositionally biased stretch (low complexity) spans 169-191; the sequence is KPGAMGMPGAKGEIGPKGEIGPM. A compositionally biased stretch (gly residues) spans 204 to 218; it reads GLPGIGKPGGPGLPG. Low complexity predominate over residues 298-307; it reads PQGLIGVPGV. 2 stretches are compositionally biased toward gly residues: residues 329–338 and 412–421; these read GFPGGKGEQG and GPKGEGGVVG. Composition is skewed to low complexity over residues 470-507 and 548-557; these read LPGLPGVPGLLGPKGEPGIPGDQGLQGPPGIPGIVGPS and PGALGPQGQP. The span at 559–579 shows a compositional bias: pro residues; it reads LPGPPGPPGPPGPPAVMPTPS. The nonhelical region (NC1) stretch occupies residues 573-744; sequence AVMPTPSPQG…SFSGYLLYPM (172 aa). Positions 611–744 constitute a C1q domain; that stretch reads PAYEMPAFTA…SFSGYLLYPM (134 aa).

As to quaternary structure, homotrimers, or heterotrimers in association with alpha 2(VIII) type collagens. Four homotrimers can form a tetrahedron stabilized by central interacting C-terminal NC1 trimers. Prolines at the third position of the tripeptide repeating unit (G-X-Y) are hydroxylated in some or all of the chains. In terms of processing, proteolytically cleaved by neutrophil elastase, in vitro. Proteolytic processing produces the C-terminal NC1 domain fragment, vastatin. In terms of tissue distribution, high levels in calvarium, eye and skin of newborn mice; also in various epithelial, endothelial and mesenchymal cells.

It localises to the secreted. The protein resides in the extracellular space. It is found in the extracellular matrix. Its subcellular location is the basement membrane. Functionally, macromolecular component of the subendothelium. Major component of the Descemet's membrane (basement membrane) of corneal endothelial cells. Also a component of the endothelia of blood vessels. Necessary for migration and proliferation of vascular smooth muscle cells and thus, has a potential role in the maintenance of vessel wall integrity and structure, in particular in atherogenesis. Vastatin, the C-terminal fragment comprising the NC1 domain, inhibits aortic endothelial cell proliferation and causes cell apoptosis. This chain is Collagen alpha-1(VIII) chain (Col8a1), found in Mus musculus (Mouse).